A 124-amino-acid polypeptide reads, in one-letter code: Fluoride-specific ion channel FluC 2 (124 aa).

3 helical membrane passes run 36–56 (TFLI…YLAF), 66–86 (LFVM…SLDT), and 100–120 (LYAI…LALV). Na(+) contacts are provided by G74 and T77.

Belongs to the fluoride channel Fluc/FEX (TC 1.A.43) family.

The protein localises to the cell inner membrane. The catalysed reaction is fluoride(in) = fluoride(out). With respect to regulation, na(+) is not transported, but it plays an essential structural role and its presence is essential for fluoride channel function. Its function is as follows. Fluoride-specific ion channel. Important for reducing fluoride concentration in the cell, thus reducing its toxicity. In Nitrobacter hamburgensis (strain DSM 10229 / NCIMB 13809 / X14), this protein is Fluoride-specific ion channel FluC 2.